A 299-amino-acid polypeptide reads, in one-letter code: Hydroxymethylglutaryl-CoA lyase YngG (299 aa).

The 268-residue stretch at 7–274 folds into the Pyruvate carboxyltransferase domain; the sequence is VTIKEVGPRD…KTNVKLEKLL (268 aa). Arg15 serves as a coordination point for substrate. A divalent metal cation-binding residues include Asp16, His207, and His209. Residue Cys240 is part of the active site. Residue Asn249 participates in a divalent metal cation binding.

This sequence belongs to the HMG-CoA lyase family. As to quaternary structure, homodimer and homotetramer.

The catalysed reaction is (3S)-3-hydroxy-3-methylglutaryl-CoA = acetoacetate + acetyl-CoA. It participates in metabolic intermediate metabolism; (S)-3-hydroxy-3-methylglutaryl-CoA degradation; acetoacetate from (S)-3-hydroxy-3-methylglutaryl-CoA: step 1/1. In terms of biological role, involved in the catabolism of branched amino acids such as leucine. This is Hydroxymethylglutaryl-CoA lyase YngG (yngG) from Bacillus subtilis (strain 168).